The sequence spans 299 residues: Tyrosine recombinase XerC (299 aa).

The Core-binding (CB) domain occupies M1–N85. In terms of domain architecture, Tyr recombinase spans R106–D285. Residues R146, K170, H237, R240, and H263 contribute to the active site. Y272 (O-(3'-phospho-DNA)-tyrosine intermediate) is an active-site residue.

This sequence belongs to the 'phage' integrase family. XerC subfamily. As to quaternary structure, forms a cyclic heterotetrameric complex composed of two molecules of XerC and two molecules of XerD.

The protein localises to the cytoplasm. In terms of biological role, site-specific tyrosine recombinase, which acts by catalyzing the cutting and rejoining of the recombining DNA molecules. The XerC-XerD complex is essential to convert dimers of the bacterial chromosome into monomers to permit their segregation at cell division. It also contributes to the segregational stability of plasmids. The polypeptide is Tyrosine recombinase XerC (Pseudomonas fluorescens (strain Pf0-1)).